Consider the following 113-residue polypeptide: MHTSELLKHIYDINLSYLLLAQRLIVQDKASAMFRLGINEEMANTLGALTLPQMVKLAETNQLVCHFRFDDHQTITRLTQDSRVDDLQQIHTGIMLSTRLLNEVDDTARKKRA.

Belongs to the FlhD family. Homodimer; disulfide-linked. Forms a heterohexamer composed of two FlhC and four FlhD subunits. Each FlhC binds a FlhD dimer, forming a heterotrimer, and a hexamer assembles by dimerization of two heterotrimers.

The protein localises to the cytoplasm. In terms of biological role, functions in complex with FlhC as a master transcriptional regulator that regulates transcription of several flagellar and non-flagellar operons by binding to their promoter region. Activates expression of class 2 flagellar genes, including fliA, which is a flagellum-specific sigma factor that turns on the class 3 genes. Also regulates genes whose products function in a variety of physiological pathways. The polypeptide is Flagellar transcriptional regulator FlhD (Salmonella typhi).